Consider the following 110-residue polypeptide: Keratin-associated protein 6-3 (110 aa).

Belongs to the KRTAP type 6 family. As to quaternary structure, interacts with hair keratins.

In the hair cortex, hair keratin intermediate filaments are embedded in an interfilamentous matrix, consisting of hair keratin-associated proteins (KRTAP), which are essential for the formation of a rigid and resistant hair shaft through their extensive disulfide bond cross-linking with abundant cysteine residues of hair keratins. The matrix proteins include the high-sulfur and high-glycine-tyrosine keratins. The polypeptide is Keratin-associated protein 6-3 (Homo sapiens (Human)).